The following is a 425-amino-acid chain: Succinate--CoA ligase [ADP-forming] subunit beta, mitochondrial (425 aa).

The N-terminal 14 residues, 1–14 (NNHGLQIQQQQQRN), are a transit peptide targeting the mitochondrion. Positions 23–250 (MELLQEAGVS…SNSAYRQKKI (228 aa)) constitute an ATP-grasp domain. Lys40 carries the N6-acetyllysine modification. Phosphotyrosine is present on Tyr46. An N6-acetyllysine; alternate modification is found at Lys50. Position 50 is an N6-succinyllysine; alternate (Lys50). ATP-binding positions include Lys60 and 67–69 (GRG). 4 positions are modified to N6-acetyllysine: Lys91, Lys101, Lys105, and Lys178. Residues Asn220 and Asp234 each contribute to the Mg(2+) site. At Ser241 the chain carries Phosphoserine. Asn285 is a substrate binding site. Phosphothreonine is present on Thr303. At Lys330 the chain carries N6-acetyllysine. A substrate-binding site is contributed by 342–344 (GIM). Lys400 is subject to N6-acetyllysine.

Belongs to the succinate/malate CoA ligase beta subunit family. ATP-specific subunit beta subfamily. In terms of assembly, heterodimer of an alpha and a beta subunit. The beta subunit determines specificity for ATP. Interacts with ALAS2. Mg(2+) is required as a cofactor.

It is found in the mitochondrion. The enzyme catalyses succinate + ATP + CoA = succinyl-CoA + ADP + phosphate. It functions in the pathway carbohydrate metabolism; tricarboxylic acid cycle; succinate from succinyl-CoA (ligase route): step 1/1. In terms of biological role, ATP-specific succinyl-CoA synthetase functions in the citric acid cycle (TCA), coupling the hydrolysis of succinyl-CoA to the synthesis of ATP and thus represents the only step of substrate-level phosphorylation in the TCA. The beta subunit provides nucleotide specificity of the enzyme and binds the substrate succinate, while the binding sites for coenzyme A and phosphate are found in the alpha subunit. This is Succinate--CoA ligase [ADP-forming] subunit beta, mitochondrial from Sus scrofa (Pig).